The chain runs to 565 residues: E3 ubiquitin-protein ligase RNF168 (565 aa).

The segment at 16–55 (CGICMEILLEPVTLPCNHTLCNPCFQSTVEKANLCCPFCR) adopts an RING-type zinc-finger fold. The residue at position 70 (S70) is a Phosphoserine. The LR motif 1 motif lies at 110–128 (LSEPGELRREYEEEISRVE). At S134 the chain carries Phosphoserine. The short motif at 143–151 (EEYIQRLLA) is the UMI motif element. 2 disordered regions span residues 150–223 (LAEE…KTFG) and 252–302 (SKET…PQLC). The segment covering 157-179 (EKRQREKRRSEMEEQLRGDEELA) has biased composition (basic and acidic residues). Residues 168–191 (MEEQLRGDEELARSLSTSINSNYE) carry the MIU motif 1 motif. Residues 181–201 (SLSTSINSNYERNTLASPLSS) show a composition bias toward polar residues. S197 is subject to Phosphoserine. K210 participates in a covalent cross-link: Glycyl lysine isopeptide (Lys-Gly) (interchain with G-Cter in SUMO2). Polar residues predominate over residues 275 to 293 (PTLSPQTCLETQEQGSESS). Phosphoserine is present on residues S413 and S414. Residues 438-461 (RHKQEEQDRLLALQLQKEVDKEQM) carry the MIU motif 2 motif. Residues 458–521 (KEQMVPNRQK…TKGDYWEPFK (64 aa)) are disordered. The LR motif 2 motif lies at 465-476 (RQKGSPDQYQLR). The span at 466 to 477 (QKGSPDQYQLRT) shows a compositional bias: polar residues. S469 is subject to Phosphoserine. Residues 504–518 (DHSKSPRNTKGDYWE) are compositionally biased toward basic and acidic residues. A Glycyl lysine isopeptide (Lys-Gly) (interchain with G-Cter in SUMO2) cross-link involves residue K525.

This sequence belongs to the RNF168 family. As to quaternary structure, monomer. Interacts with UBE2N/UBC13. Sumoylated with SUMO1 by PIAS4 in response to double-strand breaks (DSBs). Post-translationally, ubiquitinated.

The protein localises to the nucleus. It catalyses the reaction S-ubiquitinyl-[E2 ubiquitin-conjugating enzyme]-L-cysteine + [acceptor protein]-L-lysine = [E2 ubiquitin-conjugating enzyme]-L-cysteine + N(6)-ubiquitinyl-[acceptor protein]-L-lysine.. Its pathway is protein modification; protein ubiquitination. E3 ubiquitin-protein ligase required for accumulation of repair proteins to sites of DNA damage. Acts with UBE2N/UBC13 to amplify the RNF8-dependent histone ubiquitination. Recruited to sites of DNA damage at double-strand breaks (DSBs) by binding to ubiquitinated histone H2A and H2AX and amplifies the RNF8-dependent H2A ubiquitination, promoting the formation of 'Lys-63'-linked ubiquitin conjugates. This leads to concentrate ubiquitinated histones H2A and H2AX at DNA lesions to the threshold required for recruitment of TP53BP1 and BRCA1. Also recruited at DNA interstrand cross-links (ICLs) sites and promotes accumulation of 'Lys-63'-linked ubiquitination of histones H2A and H2AX, leading to recruitment of FAAP20 and Fanconi anemia (FA) complex, followed by interstrand cross-link repair. H2A ubiquitination also mediates the ATM-dependent transcriptional silencing at regions flanking DSBs in cis, a mechanism to avoid collision between transcription and repair intermediates. Also involved in class switch recombination in immune system, via its role in regulation of DSBs repair. Following DNA damage, promotes the ubiquitination and degradation of JMJD2A/KDM4A in collaboration with RNF8, leading to unmask H4K20me2 mark and promote the recruitment of TP53BP1 at DNA damage sites. Not able to initiate 'Lys-63'-linked ubiquitination in vitro; possibly due to partial occlusion of the UBE2N/UBC13-binding region. Catalyzes monoubiquitination of 'Lys-13' and 'Lys-15' of nucleosomal histone H2A (H2AK13Ub and H2AK15Ub, respectively). The sequence is that of E3 ubiquitin-protein ligase RNF168 from Mus musculus (Mouse).